The sequence spans 1065 residues: FERM, ARHGEF and pleckstrin domain-containing protein 2 (1065 aa).

In terms of domain architecture, FERM spans 44 to 324 (MRIRVKLLDS…EYHTFFRLSD (281 aa)). Phosphoserine occurs at positions 389 and 440. Disordered stretches follow at residues 406–489 (SFYP…LKSH) and 504–534 (EQGA…HKHM). Residues 440–459 (STAAERSSGPSSSDGPSTQS) show a composition bias toward low complexity. Basic and acidic residues predominate over residues 524–534 (DNQEEQKHKHM). Positions 538 to 729 (EAYFIAKEIL…TEVTTELQQS (192 aa)) constitute a DH domain. Residues 758–855 (EFIREGCLHK…WMQDLNAAIQ (98 aa)) form the PH 1 domain. Residues Ser-863 and Ser-880 each carry the phosphoserine modification. A disordered region spans residues 874 to 902 (TRTPRSSDEVSLEESEDGRGNRGSLEGNS). A PH 2 domain is found at 930–1027 (ENQLSGYLLR…WMDVIKRASS (98 aa)).

As to quaternary structure, interacts with PLXNA1. Interaction with PLXNA1 or PIP5K1C lowers its guanine nucleotide exchange activity. Dissociates from PLXNA1 when SEMA3A binds to the receptor. Interacts with PIP5K1C via its FERM domain. The interaction with PIP5K1C is enhanced by SEMA3A binding. Interacts with RAC1. As to expression, detected in adult brain, lung and testis. Detected in embryonic hippocampus and brain cortex.

In terms of biological role, functions as a guanine nucleotide exchange factor that activates RAC1. May have relatively low activity. Plays a role in the response to class 3 semaphorins and remodeling of the actin cytoskeleton. Plays a role in TNFSF11-mediated osteoclast differentiation, especially in podosome rearrangement and reorganization of the actin cytoskeleton. Regulates the activation of ITGB3, integrin signaling and cell adhesion. This Mus musculus (Mouse) protein is FERM, ARHGEF and pleckstrin domain-containing protein 2 (Farp2).